Here is a 500-residue protein sequence, read N- to C-terminus: Aspartyl/glutamyl-tRNA(Asn/Gln) amidotransferase subunit B (500 aa).

The protein belongs to the GatB/GatE family. GatB subfamily. In terms of assembly, heterotrimer of A, B and C subunits.

The enzyme catalyses L-glutamyl-tRNA(Gln) + L-glutamine + ATP + H2O = L-glutaminyl-tRNA(Gln) + L-glutamate + ADP + phosphate + H(+). It carries out the reaction L-aspartyl-tRNA(Asn) + L-glutamine + ATP + H2O = L-asparaginyl-tRNA(Asn) + L-glutamate + ADP + phosphate + 2 H(+). Its function is as follows. Allows the formation of correctly charged Asn-tRNA(Asn) or Gln-tRNA(Gln) through the transamidation of misacylated Asp-tRNA(Asn) or Glu-tRNA(Gln) in organisms which lack either or both of asparaginyl-tRNA or glutaminyl-tRNA synthetases. The reaction takes place in the presence of glutamine and ATP through an activated phospho-Asp-tRNA(Asn) or phospho-Glu-tRNA(Gln). This chain is Aspartyl/glutamyl-tRNA(Asn/Gln) amidotransferase subunit B, found in Brucella melitensis biotype 2 (strain ATCC 23457).